A 705-amino-acid polypeptide reads, in one-letter code: Choline transporter-like protein 2 (705 aa).

Over M1–D31 the chain is Cytoplasmic. T12 bears the Phosphothreonine mark. The chain crosses the membrane as a helical span at residues V32–A52. The Extracellular portion of the chain corresponds to W53 to W231. Residues N186 and N199 are each glycosylated (N-linked (GlcNAc...) asparagine). The chain crosses the membrane as a helical span at residues Y232–L252. Over R253–L255 the chain is Cytoplasmic. A helical transmembrane segment spans residues A256 to F276. The Extracellular portion of the chain corresponds to H277 to W314. A helical transmembrane segment spans residues L315–L335. At R336–P363 the chain is on the cytoplasmic side. Residues L364–L384 traverse the membrane as a helical segment. Residues S385–L455 lie on the Extracellular side of the membrane. N-linked (GlcNAc...) asparagine glycosylation is present at N414. The helical transmembrane segment at A456–L478 threads the bilayer. Topologically, residues R479–S503 are cytoplasmic. The chain crosses the membrane as a helical span at residues L504 to L524. Residues D525–Y562 lie on the Extracellular side of the membrane. The chain crosses the membrane as a helical span at residues I563–L583. Residues M584–D598 are Cytoplasmic-facing. A helical membrane pass occupies residues F599 to F619. At F620–Y637 the chain is on the extracellular side. The chain crosses the membrane as a helical span at residues W638–V658. The Cytoplasmic segment spans residues Y659–S705.

It belongs to the CTL (choline transporter-like) family. Interacts with COCH. Post-translationally, N-glycosylated; contains sialic acid. Not O-glycosylated. Expressed at high levels in lung, colon and in supporting cells of the inner ear (at protein level). Progressively lower levels in brain, tongue, liver and kidney (at protein level). In the tongue, strongly expressed in epithelial cells and in nerves within the musculature. Within the nerves, expression observed in the perineurial cells of the nerve sheath, in the Schwann cells and myelinated nerve fibers (at protein level). In the kidney, prominent expression in glomeruli in the lining of Bowman's capsule and on the mesangial cells adjacent to the vessels within the glomerulus (at protein level). Strongly expressed on the membranes of splenocytes (at protein level).

It localises to the cell membrane. It is found in the mitochondrion outer membrane. The catalysed reaction is choline(out) + n H(+)(in) = choline(in) + n H(+)(out). It carries out the reaction ethanolamine(out) + n H(+)(in) = ethanolamine(in) + n H(+)(out). In terms of biological role, choline/H+ antiporter, mainly in mitochodria. Also acts as a low-affinity ethanolamine/H+ antiporter, regulating the supply of extracellular ethanolamine (Etn) for the CDP-Etn pathway, redistribute intracellular Etn and balance the CDP-Cho and CDP-Etn arms of the Kennedy pathway. This chain is Choline transporter-like protein 2 (SLC44A2), found in Cavia porcellus (Guinea pig).